Here is a 403-residue protein sequence, read N- to C-terminus: Phosphopentomutase (403 aa).

6 residues coordinate Mn(2+): Asp-13, Asp-298, His-303, Asp-339, His-340, and His-351.

The protein belongs to the phosphopentomutase family. Requires Mn(2+) as cofactor.

Its subcellular location is the cytoplasm. It carries out the reaction 2-deoxy-alpha-D-ribose 1-phosphate = 2-deoxy-D-ribose 5-phosphate. It catalyses the reaction alpha-D-ribose 1-phosphate = D-ribose 5-phosphate. It functions in the pathway carbohydrate degradation; 2-deoxy-D-ribose 1-phosphate degradation; D-glyceraldehyde 3-phosphate and acetaldehyde from 2-deoxy-alpha-D-ribose 1-phosphate: step 1/2. Functionally, isomerase that catalyzes the conversion of deoxy-ribose 1-phosphate (dRib-1-P) and ribose 1-phosphate (Rib-1-P) to deoxy-ribose 5-phosphate (dRib-5-P) and ribose 5-phosphate (Rib-5-P), respectively. The sequence is that of Phosphopentomutase from Streptococcus suis (strain 05ZYH33).